The following is a 260-amino-acid chain: Coiled-coil domain-containing protein 127 (260 aa).

Residues 47 to 135 (ESQKEIEKAR…QIIQEKSQRQ (89 aa)) are a coiled coil.

This is Coiled-coil domain-containing protein 127 (Ccdc127) from Rattus norvegicus (Rat).